We begin with the raw amino-acid sequence, 335 residues long: E3 ubiquitin ligase rnf-121 (335 aa).

Residues 1–47 (MGQHGAIRLQNEVQEGMPPPHELTEEEQWAEEHRKMHEKHKGHEAMH) are Cytoplasmic-facing. Residues 48-68 (MEMMVIFMISVIVGQIFLVTW) form a helical membrane-spanning segment. Residues 69–72 (KRKH) are Lumenal-facing. The helical transmembrane segment at 73–93 (FKSYQMCTLIGMLTIPVYVCF) threads the bilayer. The Cytoplasmic segment spans residues 94–99 (NRSWYR). A helical transmembrane segment spans residues 100–120 (FLATWLVFCIFSAFIWLKASA). At 121–143 (QHISGGTPRFVYKWFLFLHKLSY) the chain is on the lumenal side. The chain crosses the membrane as a helical span at residues 144–164 (VLGVVGYLIMMGALLGFHVLF). Over 165–168 (GVSQ) the chain is Cytoplasmic. A helical membrane pass occupies residues 169–189 (PTLMDAGILFMFYGVYYGVLG). Topologically, residues 190–335 (RDFAHICTAR…QGLTTWMGLE (146 aa)) are lumenal. An RING-type; atypical zinc finger spans residues 222-284 (CAVCGGRLDD…GKLQTCPYCK (63 aa)).

It belongs to the RNF121 family. As to expression, expressed in body wall muscles, the hypodermis, seam cells, vulval cells, spermathecal cells, uterine cells and the distal tip cell (at protein level).

The protein resides in the endoplasmic reticulum membrane. The protein localises to the golgi apparatus membrane. The enzyme catalyses S-ubiquitinyl-[E2 ubiquitin-conjugating enzyme]-L-cysteine + [acceptor protein]-L-lysine = [E2 ubiquitin-conjugating enzyme]-L-cysteine + N(6)-ubiquitinyl-[acceptor protein]-L-lysine.. Its pathway is protein modification; protein ubiquitination. Its function is as follows. E3 ubiquitin ligase which accepts ubiquitin and transfers it to substrates such as the beta-integrin subunit pat-3, promoting their degradation by the endoplasmic reticulum-associated degradation (ERAD) pathway which is a pathway involved in ubiquitin-dependent degradation of misfolded endoplasmic reticulum proteins. Negatively regulates the unfolded protein response to reduce endoplasmic reticulum stress. Required for the cessation of distal tip cell migration at the end of larval morphogenesis. Plays a role in germline and gonad development. In Caenorhabditis elegans, this protein is E3 ubiquitin ligase rnf-121.